The sequence spans 648 residues: Macrolide export ATP-binding/permease protein MacB (648 aa).

The 239-residue stretch at 5-243 (LELKDIRRSY…TGGTEPVVNT (239 aa)) folds into the ABC transporter domain. 41 to 48 (GASGSGKS) lines the ATP pocket. The next 4 helical transmembrane spans lie at 273-293 (LLTM…VVVG), 523-543 (LFLT…VMNI), 576-596 (AVLV…LIAF), and 611-631 (PLAL…FGWL).

Belongs to the ABC transporter superfamily. Macrolide exporter (TC 3.A.1.122) family. In terms of assembly, homodimer. Part of the tripartite efflux system MacAB-TolC, which is composed of an inner membrane transporter, MacB, a periplasmic membrane fusion protein, MacA, and an outer membrane component, TolC. The complex forms a large protein conduit and can translocate molecules across both the inner and outer membranes. Interacts with MacA.

The protein resides in the cell inner membrane. Functionally, part of the tripartite efflux system MacAB-TolC. MacB is a non-canonical ABC transporter that contains transmembrane domains (TMD), which form a pore in the inner membrane, and an ATP-binding domain (NBD), which is responsible for energy generation. Confers resistance against macrolides. The chain is Macrolide export ATP-binding/permease protein MacB from Escherichia coli (strain UTI89 / UPEC).